The chain runs to 147 residues: Large ribosomal subunit protein uL13 (147 aa).

This sequence belongs to the universal ribosomal protein uL13 family. As to quaternary structure, part of the 50S ribosomal subunit.

This protein is one of the early assembly proteins of the 50S ribosomal subunit, although it is not seen to bind rRNA by itself. It is important during the early stages of 50S assembly. In Mycolicibacterium smegmatis (strain ATCC 700084 / mc(2)155) (Mycobacterium smegmatis), this protein is Large ribosomal subunit protein uL13.